The primary structure comprises 348 residues: tRNA-specific 2-thiouridylase MnmA (348 aa).

Residues 8–15 (LLSGGVDS) and M34 contribute to the ATP site. Catalysis depends on C105, which acts as the Nucleophile. A disulfide bridge links C105 with C197. An ATP-binding site is contributed by G129. An interaction with tRNA region spans residues 147-149 (KDQ). Residue C197 is the Cysteine persulfide intermediate of the active site.

It belongs to the MnmA/TRMU family.

The protein localises to the cytoplasm. The enzyme catalyses S-sulfanyl-L-cysteinyl-[protein] + uridine(34) in tRNA + AH2 + ATP = 2-thiouridine(34) in tRNA + L-cysteinyl-[protein] + A + AMP + diphosphate + H(+). In terms of biological role, catalyzes the 2-thiolation of uridine at the wobble position (U34) of tRNA, leading to the formation of s(2)U34. This chain is tRNA-specific 2-thiouridylase MnmA, found in Fervidobacterium nodosum (strain ATCC 35602 / DSM 5306 / Rt17-B1).